Consider the following 210-residue polypeptide: Small ribosomal subunit protein uS7 (210 aa).

The protein belongs to the universal ribosomal protein uS7 family.

This Podocoryna carnea (Hydrozoan) protein is Small ribosomal subunit protein uS7 (RPS5).